A 437-amino-acid polypeptide reads, in one-letter code: UBX domain-containing protein 6 (437 aa).

2 disordered regions span residues 1 to 45 (MNSF…AQGG) and 89 to 109 (ERRQ…QPDR). Residues 7-18 (FLNKKRVQNHFK) show a composition bias toward basic residues. Residues 179 to 251 (ETAIETICKY…VFTKPSDVHL (73 aa)) enclose the PUB domain. The UBX domain occupies 332 to 409 (YRYKYTLIRV…SLAPAALLHV (78 aa)).

Interacts with cdc-48.1 (via N-terminus) and cdc-48.2 (via N-terminus). In terms of tissue distribution, expressed in the pharynx and some head neurons.

In terms of biological role, probably acts as an adapter for ATPase cdc-48.1 and/or cdc-48.2, conferring substrate specificity. Involved in the lysosomal clearance of cellular material in diet restricted conditions. The chain is UBX domain-containing protein 6 from Caenorhabditis elegans.